The following is a 403-amino-acid chain: SEC14-like protein 2 (403 aa).

Position 51 is an N6-succinyllysine (K51). Positions 76-249 (PPEVIQQYLS…EYGGTMTDPD (174 aa)) constitute a CRAL-TRIO domain. 2 positions are modified to N6-succinyllysine: K253 and K257. One can recognise a GOLD domain in the interval 275 to 383 (KQQYEHSVQI…AKKVNFTVEV (109 aa)). K393 bears the N6-succinyllysine mark.

Monomer. In terms of tissue distribution, widely expressed. Strong expression in liver, brain and prostate.

The protein resides in the cytoplasm. It localises to the nucleus. Its function is as follows. Carrier protein. Binds to some hydrophobic molecules and promotes their transfer between the different cellular sites. Binds with high affinity to alpha-tocopherol. Also binds with a weaker affinity to other tocopherols and to tocotrienols. May have a transcriptional activatory activity via its association with alpha-tocopherol. Probably recognizes and binds some squalene structure, suggesting that it may regulate cholesterol biosynthesis by increasing the transfer of squalene to a metabolic active pool in the cell. The protein is SEC14-like protein 2 (SEC14L2) of Homo sapiens (Human).